Consider the following 355-residue polypeptide: 3-dehydroquinate synthase (355 aa).

Residues 71–76 (EGEASK), 105–109 (GVVGD), 129–130 (TS), K142, and K151 each bind NAD(+). The Zn(2+) site is built by E184, H246, and H263.

It belongs to the sugar phosphate cyclases superfamily. Dehydroquinate synthase family. Requires Co(2+) as cofactor. Zn(2+) is required as a cofactor. The cofactor is NAD(+).

It is found in the cytoplasm. The catalysed reaction is 7-phospho-2-dehydro-3-deoxy-D-arabino-heptonate = 3-dehydroquinate + phosphate. Its pathway is metabolic intermediate biosynthesis; chorismate biosynthesis; chorismate from D-erythrose 4-phosphate and phosphoenolpyruvate: step 2/7. Functionally, catalyzes the conversion of 3-deoxy-D-arabino-heptulosonate 7-phosphate (DAHP) to dehydroquinate (DHQ). The chain is 3-dehydroquinate synthase from Streptococcus thermophilus (strain ATCC BAA-491 / LMD-9).